A 126-amino-acid chain; its full sequence is SNRPMPLNIYQFKNMIQCTVPSRSWWDFADYGCYCGRGGSGTPVDDLDRCCQVHDNCYNQAQEITGCRPKWKTYTYECSQGTLTCKGRNNACAATVCDCDRLAAICFAGAPYNDNNYNIDLKARCQ.

A signal peptide is located at residue Ser-1. A propeptide spanning residues 2–7 (NRPMPL) is cleaved from the precursor. 7 disulfide bridges follow: Cys-18–Cys-78, Cys-33–Cys-125, Cys-35–Cys-51, Cys-50–Cys-106, Cys-57–Cys-99, Cys-67–Cys-92, and Cys-85–Cys-97. Residues Tyr-34, Gly-36, and Gly-38 each coordinate Ca(2+). Residue His-54 is part of the active site. Asp-55 serves as a coordination point for Ca(2+). Residue Asp-100 is part of the active site.

The protein belongs to the phospholipase A2 family. Group I subfamily. D49 sub-subfamily. In terms of assembly, monomer. Ca(2+) is required as a cofactor. Expressed by the venom gland.

The protein localises to the secreted. The enzyme catalyses a 1,2-diacyl-sn-glycero-3-phosphocholine + H2O = a 1-acyl-sn-glycero-3-phosphocholine + a fatty acid + H(+). Its function is as follows. Snake venom phospholipase A2 (PLA2) that exhibits strong anticoagulant activity, which is not due to the catalytic activity. PLA2 catalyzes the calcium-dependent hydrolysis of the 2-acyl groups in 3-sn-phosphoglycerides. The sequence is that of Acidic phospholipase A2 4 from Naja sagittifera (Andaman cobra).